A 287-amino-acid polypeptide reads, in one-letter code: NAD kinase (287 aa).

Asp70 functions as the Proton acceptor in the catalytic mechanism. NAD(+) is bound by residues 70 to 71 (DG), 144 to 145 (ND), Arg155, Lys172, Asp174, 185 to 190 (TAYSLS), and Gln244.

Belongs to the NAD kinase family. It depends on a divalent metal cation as a cofactor.

The protein resides in the cytoplasm. The catalysed reaction is NAD(+) + ATP = ADP + NADP(+) + H(+). Involved in the regulation of the intracellular balance of NAD and NADP, and is a key enzyme in the biosynthesis of NADP. Catalyzes specifically the phosphorylation on 2'-hydroxyl of the adenosine moiety of NAD to yield NADP. This Solibacter usitatus (strain Ellin6076) protein is NAD kinase.